The chain runs to 301 residues: Sulfate adenylyltransferase subunit 2 (301 aa).

Belongs to the PAPS reductase family. CysD subfamily. In terms of assembly, heterodimer composed of CysD, the smaller subunit, and CysN.

It carries out the reaction sulfate + ATP + H(+) = adenosine 5'-phosphosulfate + diphosphate. It participates in sulfur metabolism; hydrogen sulfide biosynthesis; sulfite from sulfate: step 1/3. In terms of biological role, with CysN forms the ATP sulfurylase (ATPS) that catalyzes the adenylation of sulfate producing adenosine 5'-phosphosulfate (APS) and diphosphate, the first enzymatic step in sulfur assimilation pathway. APS synthesis involves the formation of a high-energy phosphoric-sulfuric acid anhydride bond driven by GTP hydrolysis by CysN coupled to ATP hydrolysis by CysD. The sequence is that of Sulfate adenylyltransferase subunit 2 from Geobacter metallireducens (strain ATCC 53774 / DSM 7210 / GS-15).